We begin with the raw amino-acid sequence, 168 residues long: Pleiotrophin (168 aa).

The N-terminal stretch at 1 to 32 (MQTPQFLQQRRKFAAAFLAFIFLLAVVDTAEA) is a signal peptide. Disulfide bonds link Cys-47/Cys-76, Cys-55/Cys-85, Cys-62/Cys-89, Cys-99/Cys-131, and Cys-109/Cys-141. 2 chondroitin sulfate binding regions span residues 92–99 (KKQFGAEC) and 123–131 (KRALHNADC). The interval 139–168 (KPCGKVTKPKPQAESKKKKKEGKKQEKMLD) is disordered. Residues 147-168 (PKPQAESKKKKKEGKKQEKMLD) form a chondroitin sulfate A binding region.

Belongs to the pleiotrophin family. As to quaternary structure, interacts with ALK and NEK6. Interacts with PTPRZ1 (via chondroitin sulfate groups); promotes formation of homooligomers; oligomerization impairs tyrosine phosphatase activity. Forms a complex with PTPRZ1 and CTNNB1; this complex inactivates PTPRZ1 protein tyrosine phosphatase activity through PTN interaction and stimulates tyrosine phosphorylation of CTNNB1. Interacts with ITGB3 and ITGA5. Forms a complex with PTPRZ1 and integrin alpha-V/beta-3 (ITGAV:ITGB3) that stimulates endothelial cell migration through ITGB3 'Tyr-773' phosphorylation. Interacts with SDC3 (via heparan sulfate chains); this interaction mediates the neurite outgrowth-promoting signal from PTN to the cytoskeleton of growing neurites; this interaction mediates osteoblast recruitment. Interacts with GPC2 (via heparan sulfate); this interaction promotes neurite outgrowth through binding of PTN with chondroitin sulfate of proteoglycans, thereby releasing PTPRS of chondroitin sulfate proteoglycans (CSPGs) and leading to binding with heparan sulfate of GPC2. In terms of processing, phosphorylated by NEK6.

It is found in the secreted. In terms of biological role, secreted growth factor that mediates its signal through cell-surface proteoglycan and non-proteoglycan receptors. Binds cell-surface proteoglycan receptor via their chondroitin sulfate (CS) groups. Thereby regulates many processes like cell proliferation, cell survival, cell growth, cell differentiation and cell migration in several tissues namely neuron and bone. Also plays a role in synaptic plasticity and learning-related behavior by inhibiting long-term synaptic potentiation. Binds PTPRZ1, leading to neutralization of the negative charges of the CS chains of PTPRZ1, inducing PTPRZ1 clustering, thereby causing the dimerization and inactivation of its phosphatase activity leading to increased tyrosine phosphorylation of each of the PTPRZ1 substrates like ALK, CTNNB1 or AFAP1L2 in order to activate the PI3K-AKT pathway. Through PTPRZ1 binding controls oligodendrocyte precursor cell differentiation by enhancing the phosphorylation of AFAP1L2 in order to activate the PI3K-AKT pathway. Forms a complex with PTPRZ1 and integrin alpha-V/beta-3 (ITGAV:ITGB3) that stimulates endothelial cell migration through SRC dephosphorylation and activation that consequently leads to ITGB3 'Tyr-773' phosphorylation. In adult hippocampus promotes dendritic arborization, spine development, and functional integration and connectivity of newborn granule neurons through ALK by activating AKT signaling pathway. Binds GPC2 and chondroitin sulfate proteoglycans (CSPGs) at the neuron surface, leading to abrogation of binding between PTPRS and CSPGs and neurite outgrowth promotion. Binds SDC3 and mediates bone formation by recruiting and attaching osteoblasts/osteoblast precursors to the sites for new bone deposition. Binds ALK and promotes cell survival and cell proliferation through MAPK pathway activation. Inhibits proliferation and enhances differentiation of neural stem cells by inhibiting FGF2-induced fibroblast growth factor receptor signaling pathway. Mediates regulatory mechanisms in normal hemostasis and in hematopoietic regeneration and in maintaining the balance of myeloid and lymphoid regeneration. In addition may play a role in the female reproductive system, auditory response and the progesterone-induced decidualization pathway. The chain is Pleiotrophin from Sus scrofa (Pig).